A 121-amino-acid chain; its full sequence is uncharacterized protein (121 aa).

This is an uncharacterized protein from Caenorhabditis elegans.